The chain runs to 428 residues: Serine--tRNA ligase (428 aa).

Residue 231-233 coordinates L-serine; it reads TAE. 262–264 contributes to the ATP binding site; sequence RSE. E285 contacts L-serine. An ATP-binding site is contributed by 349–352; it reads EISS. Residue S385 participates in L-serine binding.

This sequence belongs to the class-II aminoacyl-tRNA synthetase family. Type-1 seryl-tRNA synthetase subfamily. Homodimer. The tRNA molecule binds across the dimer.

It is found in the cytoplasm. It carries out the reaction tRNA(Ser) + L-serine + ATP = L-seryl-tRNA(Ser) + AMP + diphosphate + H(+). The enzyme catalyses tRNA(Sec) + L-serine + ATP = L-seryl-tRNA(Sec) + AMP + diphosphate + H(+). Its pathway is aminoacyl-tRNA biosynthesis; selenocysteinyl-tRNA(Sec) biosynthesis; L-seryl-tRNA(Sec) from L-serine and tRNA(Sec): step 1/1. In terms of biological role, catalyzes the attachment of serine to tRNA(Ser). Is also able to aminoacylate tRNA(Sec) with serine, to form the misacylated tRNA L-seryl-tRNA(Sec), which will be further converted into selenocysteinyl-tRNA(Sec). The polypeptide is Serine--tRNA ligase (Staphylococcus aureus (strain USA300)).